The chain runs to 358 residues: DnaJ homolog subfamily B member 11 (358 aa).

The signal sequence occupies residues 1-22; that stretch reads MAPQNLGTFCLLLLYLIGTVIA. A J domain is found at 25–90; it reads DFYKILGVPR…EKRKQYDTYG (66 aa). At T188 the chain carries Phosphothreonine. N261 carries N-linked (GlcNAc...) asparagine glycosylation.

As to quaternary structure, part of a large chaperone multiprotein complex comprising DNAJB11, HSP90B1, HSPA5, HYOU, PDIA2, PDIA4, PDIA6, PPIB, SDF2L1, UGGT1 and very small amounts of ERP29, but not, or at very low levels, CALR nor CANX. Binds to denatured substrates in an ATP-independent manner. Interacts via the J domain with HSPA5 in an ATP-dependent manner. Post-translationally, contains high-mannose Endo H-sensitive carbohydrates. In terms of processing, cys-169, Cys-171, Cys-193 and Cys-196 form intramolecular disulfide bonds. The preferential partner for each Cys is not known.

Its subcellular location is the endoplasmic reticulum lumen. In terms of biological role, as a co-chaperone for HSPA5 it is required for proper folding, trafficking or degradation of proteins. Binds directly to both unfolded proteins that are substrates for ERAD and nascent unfolded peptide chains, but dissociates from the HSPA5-unfolded protein complex before folding is completed. May help recruiting HSPA5 and other chaperones to the substrate. Stimulates HSPA5 ATPase activity. It is necessary for maturation and correct trafficking of PKD1. In Bos taurus (Bovine), this protein is DnaJ homolog subfamily B member 11 (DNAJB11).